Consider the following 458-residue polypeptide: GTPase Der (458 aa).

2 EngA-type G domains span residues 4-169 (PSIA…PKDL) and 178-353 (IMMS…TQHR). GTP-binding positions include 10 to 17 (GRPNVGKS), 57 to 61 (DTGGL), 120 to 123 (NKCE), 184 to 191 (GRPNVGKS), 231 to 235 (DTAGI), and 296 to 299 (NKWD). A KH-like domain is found at 354–439 (RRVTTSVVNE…PIILLWRGKQ (86 aa)).

This sequence belongs to the TRAFAC class TrmE-Era-EngA-EngB-Septin-like GTPase superfamily. EngA (Der) GTPase family. In terms of assembly, associates with the 50S ribosomal subunit.

Functionally, GTPase that plays an essential role in the late steps of ribosome biogenesis. In Prochlorococcus marinus subsp. pastoris (strain CCMP1986 / NIES-2087 / MED4), this protein is GTPase Der.